The following is a 92-amino-acid chain: Putative protein pog (92 aa).

In Acute bee paralysis virus (strain Rothamsted) (ABPV), this protein is Putative protein pog.